Reading from the N-terminus, the 405-residue chain is MYHLKCIECGAEYSRDEVIYTCSKCDGLLDVIYDYSSIKIDMEKLKTECPSVWKYAKLLPVEREPVTIQEGGTPLYKCDRLAEKIGIKKLYVKHEGMNPTGSFKDRGMTVGVTKALELGMNTVACASTGNTSAALAIYGAKAGIPVVVLLPAGKVALGKVAQALMHGAKVLSIRGNFDDALALVRTLCSQEKIYLLNSINPYRLEGQKTIGFEIADQLDFKVPDRIVLPVGNAGNITAIYKGFREFKILGITDSLPKMTGIQAEGSCPIVKAIKSGAPAITPEENPETVATAIRIGNPVNATKALSAIRESGGTAESVTDEEILAAQKDLARLEGIGVEPASAASVAGLRKLVDMGVIGRDETVVCITTGHLLKDPQTVIDVCEEPTVVDANIDAIREAIFGKAK.

K104 is subject to N6-(pyridoxal phosphate)lysine. Pyridoxal 5'-phosphate contacts are provided by residues N130, 231-235 (GNAGN), and T369.

This sequence belongs to the threonine synthase family. In terms of assembly, homotrimer. The cofactor is pyridoxal 5'-phosphate.

It catalyses the reaction O-phospho-L-homoserine + H2O = L-threonine + phosphate. The protein operates within amino-acid biosynthesis; L-threonine biosynthesis; L-threonine from L-aspartate: step 5/5. Catalyzes the gamma-elimination of phosphate from L-phosphohomoserine and the beta-addition of water to produce L-threonine. Does not catalyze the conversion of O-acetyl-L-homoserine into threonine. The sequence is that of Threonine synthase (thrC) from Methanosarcina acetivorans (strain ATCC 35395 / DSM 2834 / JCM 12185 / C2A).